The sequence spans 87 residues: Small ribosomal subunit protein uS15c (87 aa).

It belongs to the universal ribosomal protein uS15 family. Part of the 30S ribosomal subunit.

The protein localises to the plastid. It localises to the chloroplast. The chain is Small ribosomal subunit protein uS15c (rps15) from Oenothera biennis (German evening primrose).